The following is a 65-amino-acid chain: Period circadian protein (65 aa).

A disordered region spans residues E1 to K65. Residues V18 to N28 are compositionally biased toward polar residues. Positions A29 to N38 are enriched in low complexity. The segment covering V56 to K65 has biased composition (polar residues).

In terms of assembly, forms a heterodimer with timeless (TIM); the complex then translocates into the nucleus. Phosphorylated with a circadian rhythmicity, probably by the double-time protein (dbt). Phosphorylation could be implicated in the stability of per monomer and in the formation of heterodimer per-tim.

It is found in the nucleus. It localises to the cytoplasm. Its subcellular location is the perinuclear region. Functionally, essential for biological clock functions. Determines the period length of circadian and ultradian rhythms; an increase in PER dosage leads to shortened circadian rhythms and a decrease leads to lengthened circadian rhythms. Essential for the circadian rhythmicity of locomotor activity, eclosion behavior, and for the rhythmic component of the male courtship song that originates in the thoracic nervous system. The biological cycle depends on the rhythmic formation and nuclear localization of the TIM-PER complex. Light induces the degradation of TIM, which promotes elimination of PER. Nuclear activity of the heterodimer coordinatively regulates PER and TIM transcription through a negative feedback loop. Behaves as a negative element in circadian transcriptional loop. Does not appear to bind DNA, suggesting indirect transcriptional inhibition. In Drosophila mojavensis (Fruit fly), this protein is Period circadian protein (per).